The primary structure comprises 359 residues: Peptide chain release factor 1 (359 aa).

Glutamine 235 is subject to N5-methylglutamine. Residues 285–305 (KRDSEISQMRKSQIGSGDRSE) are disordered. Residues 290–299 (ISQMRKSQIG) show a composition bias toward polar residues.

The protein belongs to the prokaryotic/mitochondrial release factor family. Post-translationally, methylated by PrmC. Methylation increases the termination efficiency of RF1.

It is found in the cytoplasm. Functionally, peptide chain release factor 1 directs the termination of translation in response to the peptide chain termination codons UAG and UAA. The chain is Peptide chain release factor 1 from Ehrlichia canis (strain Jake).